A 616-amino-acid polypeptide reads, in one-letter code: Cytochrome c oxidase subunit 1 (616 aa).

A helical transmembrane segment spans residues 28–48 (HLYLISGGFFFLLGGLEALFI). His72 lines the Fe(II)-heme a pocket. 6 helical membrane passes run 75 to 95 (TMIF…VVPL), 102 to 122 (VAFP…GLFL), 158 to 178 (GLQI…VTII), 198 to 218 (FVTS…LIFM), 243 to 263 (LFWV…FGIF), and 275 to 295 (LFGY…GFMV). Residues His249 and Tyr253 each contribute to the Cu cation site. A cross-link (1'-histidyl-3'-tyrosine (His-Tyr)) is located at residues 249 to 253 (HPEVY). The Cu cation site is built by His298 and His299. A run of 7 helical transmembrane segments spans residues 303 to 323 (VGMG…IAVP), 349 to 369 (AVAF…LASA), 380 to 400 (FVVA…LLAG), 420 to 440 (ITFW…HFLG), 463 to 483 (ISTI…INIV), 553 to 573 (SSFL…GFTY), and 577 to 597 (AGWG…SMFL). His384 contributes to the Fe(II)-heme o binding site. Residue His384 participates in heme a3 binding. His386 lines the Fe(II)-heme a pocket.

This sequence belongs to the heme-copper respiratory oxidase family. It depends on Cu(2+) as a cofactor. The cofactor is heme.

Its subcellular location is the cell membrane. It carries out the reaction 4 Fe(II)-[cytochrome c] + O2 + 8 H(+)(in) = 4 Fe(III)-[cytochrome c] + 2 H2O + 4 H(+)(out). It participates in energy metabolism; oxidative phosphorylation. Functionally, cytochrome c oxidase is the component of the respiratory chain that catalyzes the reduction of oxygen to water. Subunits 1-3 form the functional core of the enzyme complex. Co I is the catalytic subunit of the enzyme. Electrons originating in cytochrome c are transferred via the copper A center of subunit 2 and heme a of subunit 1 to the bimetallic center formed by heme a3 and copper B. This cytochrome c oxidase shows proton pump activity across the membrane in addition to the electron transfer. This chain is Cytochrome c oxidase subunit 1 (ctaD), found in Bacillus sp. (strain PS3).